We begin with the raw amino-acid sequence, 662 residues long: uncharacterized protein (662 aa).

16 helical membrane passes run 10–30, 46–66, 68–88, 101–121, 167–187, 193–213, 217–237, 263–283, 285–305, 312–332, 342–362, 373–393, 394–414, 432–452, 460–480, and 485–505; these read SSIV…GWPV, PVIG…FLPI, AINL…LSKG, GFCW…EIIP, LIYY…TGAT, IALT…LAVA, SAYA…KPAV, PWVP…MAYL, ILYS…AILA, MWAG…LSVS, EVLI…AVLI, KVVE…LDIP, GFWL…FLIW, ALTV…SVIM, VLIP…STTI, and LVGR…ILVG.

It localises to the cell membrane. This is an uncharacterized protein from Sinorhizobium fredii (strain NBRC 101917 / NGR234).